The following is a 124-amino-acid chain: Large ribosomal subunit protein bL12 (124 aa).

The protein belongs to the bacterial ribosomal protein bL12 family. Homodimer. Part of the ribosomal stalk of the 50S ribosomal subunit. Forms a multimeric L10(L12)X complex, where L10 forms an elongated spine to which 2 to 4 L12 dimers bind in a sequential fashion. Binds GTP-bound translation factors.

Functionally, forms part of the ribosomal stalk which helps the ribosome interact with GTP-bound translation factors. Is thus essential for accurate translation. This is Large ribosomal subunit protein bL12 from Burkholderia ambifaria (strain MC40-6).